The chain runs to 89 residues: Small ribosomal subunit protein uS14A (89 aa).

The protein belongs to the universal ribosomal protein uS14 family. In terms of assembly, part of the 30S ribosomal subunit. Contacts proteins S3 and S10.

Functionally, binds 16S rRNA, required for the assembly of 30S particles and may also be responsible for determining the conformation of the 16S rRNA at the A site. The protein is Small ribosomal subunit protein uS14A of Pediococcus pentosaceus (strain ATCC 25745 / CCUG 21536 / LMG 10740 / 183-1w).